Consider the following 235-residue polypeptide: Orotidine 5'-phosphate decarboxylase (235 aa).

Substrate contacts are provided by residues Asp17, Lys39, 66–75 (DLKLHDIGNT), Thr121, Arg182, Gln191, Gly211, and Arg212. Lys68 acts as the Proton donor in catalysis.

Belongs to the OMP decarboxylase family. Type 1 subfamily. In terms of assembly, homodimer.

The enzyme catalyses orotidine 5'-phosphate + H(+) = UMP + CO2. It participates in pyrimidine metabolism; UMP biosynthesis via de novo pathway; UMP from orotate: step 2/2. Functionally, catalyzes the decarboxylation of orotidine 5'-monophosphate (OMP) to uridine 5'-monophosphate (UMP). This Rhodopseudomonas palustris (strain BisB5) protein is Orotidine 5'-phosphate decarboxylase.